The following is a 153-amino-acid chain: Small ribosomal subunit protein uS13 (153 aa).

It belongs to the universal ribosomal protein uS13 family. In terms of assembly, part of the 30S ribosomal subunit. Forms a loose heterodimer with protein S19. Forms two bridges to the 50S subunit in the 70S ribosome.

Functionally, located at the top of the head of the 30S subunit, it contacts several helices of the 16S rRNA. In the 70S ribosome it contacts the 23S rRNA (bridge B1a) and protein L5 of the 50S subunit (bridge B1b), connecting the 2 subunits; these bridges are implicated in subunit movement. The sequence is that of Small ribosomal subunit protein uS13 from Pyrobaculum calidifontis (strain DSM 21063 / JCM 11548 / VA1).